A 200-amino-acid polypeptide reads, in one-letter code: Protein GrpE (200 aa).

Over residues 1 to 10 (MQEKDSKDVT) the composition is skewed to basic and acidic residues. Residues 1–57 (MQEKDSKDVTMEDEETIASQEEIEVEGNSEESSKEEESNNSEISDENLSEENLKLKD) form a disordered region. The segment covering 11-29 (MEDEETIASQEEIEVEGNS) has biased composition (acidic residues).

The protein belongs to the GrpE family. Homodimer.

The protein resides in the cytoplasm. Functionally, participates actively in the response to hyperosmotic and heat shock by preventing the aggregation of stress-denatured proteins, in association with DnaK and GrpE. It is the nucleotide exchange factor for DnaK and may function as a thermosensor. Unfolded proteins bind initially to DnaJ; upon interaction with the DnaJ-bound protein, DnaK hydrolyzes its bound ATP, resulting in the formation of a stable complex. GrpE releases ADP from DnaK; ATP binding to DnaK triggers the release of the substrate protein, thus completing the reaction cycle. Several rounds of ATP-dependent interactions between DnaJ, DnaK and GrpE are required for fully efficient folding. The chain is Protein GrpE from Clostridium acetobutylicum (strain ATCC 824 / DSM 792 / JCM 1419 / IAM 19013 / LMG 5710 / NBRC 13948 / NRRL B-527 / VKM B-1787 / 2291 / W).